Consider the following 208-residue polypeptide: Large ribosomal subunit protein uL4 (208 aa).

Residues 44 to 79 (QRQGTHKSKERSEISGSTRKIGRQKGGGGARRGDMN) form a disordered region.

Belongs to the universal ribosomal protein uL4 family. In terms of assembly, part of the 50S ribosomal subunit.

In terms of biological role, one of the primary rRNA binding proteins, this protein initially binds near the 5'-end of the 23S rRNA. It is important during the early stages of 50S assembly. It makes multiple contacts with different domains of the 23S rRNA in the assembled 50S subunit and ribosome. Functionally, forms part of the polypeptide exit tunnel. The sequence is that of Large ribosomal subunit protein uL4 from Bacteroides thetaiotaomicron (strain ATCC 29148 / DSM 2079 / JCM 5827 / CCUG 10774 / NCTC 10582 / VPI-5482 / E50).